A 321-amino-acid polypeptide reads, in one-letter code: Glycerol-3-phosphate phosphatase (321 aa).

D34 serves as the catalytic Nucleophile. D34, D36, and D260 together coordinate Mg(2+). The Proton donor role is filled by D36.

It belongs to the HAD-like hydrolase superfamily. CbbY/CbbZ/Gph/YieH family. In terms of assembly, homodimer. It depends on Mg(2+) as a cofactor. Ubiquitously expressed with higher expression in testis, heart, skeletal muscle and islet tissue (at protein level).

The catalysed reaction is O-phospho-L-tyrosyl-[protein] + H2O = L-tyrosyl-[protein] + phosphate. It carries out the reaction sn-glycerol 1-phosphate + H2O = glycerol + phosphate. The enzyme catalyses sn-glycerol 3-phosphate + H2O = glycerol + phosphate. Its activity is regulated as follows. Inhibited by orthovanadate, beryllium trifluoride, Ca(2+) and EDTA. Its function is as follows. Glycerol-3-phosphate phosphatase hydrolyzing glycerol-3-phosphate into glycerol. Thereby, regulates the cellular levels of glycerol-3-phosphate a metabolic intermediate of glucose, lipid and energy metabolism. Was also shown to have a 2-phosphoglycolate phosphatase activity and a tyrosine-protein phosphatase activity. However, their physiological relevance is unclear. In vitro, also has a phosphatase activity toward ADP, ATP, GDP and GTP. This Mus musculus (Mouse) protein is Glycerol-3-phosphate phosphatase.